A 137-amino-acid chain; its full sequence is Small ribosomal subunit protein bS16m (137 aa).

The N-terminal 34 residues, 1–34 (MVHLTTLLCKAYRGGHLTIRLALGGCTNRPFYRI), are a transit peptide targeting the mitochondrion. Thr-130 carries the phosphothreonine modification.

Belongs to the bacterial ribosomal protein bS16 family. In terms of assembly, component of the mitochondrial ribosome small subunit (28S) which comprises a 12S rRNA and about 30 distinct proteins.

The protein localises to the mitochondrion. This is Small ribosomal subunit protein bS16m (MRPS16) from Pongo abelii (Sumatran orangutan).